Consider the following 438-residue polypeptide: GTPase Obg (438 aa).

The Obg domain occupies 6-164 (AEFVDRVKIF…RWLELELKIL (159 aa)). In terms of domain architecture, OBG-type G spans 165–335 (ADVGLVGYPN…LLDRVASIVR (171 aa)). Residues 171-178 (GYPNVGKS), 196-200 (FTTLV), 217-220 (DIPG), 287-290 (NKID), and 316-318 (SAV) contribute to the GTP site. The Mg(2+) site is built by serine 178 and threonine 198. The OCT domain occupies 358-438 (VWRKLPERFE…IGNFEFEYRE (81 aa)).

This sequence belongs to the TRAFAC class OBG-HflX-like GTPase superfamily. OBG GTPase family. In terms of assembly, monomer. It depends on Mg(2+) as a cofactor.

The protein resides in the cytoplasm. An essential GTPase which binds GTP, GDP and possibly (p)ppGpp with moderate affinity, with high nucleotide exchange rates and a fairly low GTP hydrolysis rate. Plays a role in control of the cell cycle, stress response, ribosome biogenesis and in those bacteria that undergo differentiation, in morphogenesis control. The sequence is that of GTPase Obg from Thermotoga neapolitana (strain ATCC 49049 / DSM 4359 / NBRC 107923 / NS-E).